We begin with the raw amino-acid sequence, 167 residues long: NAD(P)H-quinone oxidoreductase subunit I, chloroplastic (167 aa).

2 4Fe-4S ferredoxin-type domains span residues 55-84 and 95-124; these read GRIH…VDWK and LNYS…MTEE. Positions 64, 67, 70, 74, 104, 107, 110, and 114 each coordinate [4Fe-4S] cluster.

This sequence belongs to the complex I 23 kDa subunit family. In terms of assembly, NDH is composed of at least 16 different subunits, 5 of which are encoded in the nucleus. [4Fe-4S] cluster is required as a cofactor.

The protein resides in the plastid. The protein localises to the chloroplast thylakoid membrane. It carries out the reaction a plastoquinone + NADH + (n+1) H(+)(in) = a plastoquinol + NAD(+) + n H(+)(out). The catalysed reaction is a plastoquinone + NADPH + (n+1) H(+)(in) = a plastoquinol + NADP(+) + n H(+)(out). Functionally, NDH shuttles electrons from NAD(P)H:plastoquinone, via FMN and iron-sulfur (Fe-S) centers, to quinones in the photosynthetic chain and possibly in a chloroplast respiratory chain. The immediate electron acceptor for the enzyme in this species is believed to be plastoquinone. Couples the redox reaction to proton translocation, and thus conserves the redox energy in a proton gradient. The protein is NAD(P)H-quinone oxidoreductase subunit I, chloroplastic of Atropa belladonna (Belladonna).